The chain runs to 410 residues: LL-diaminopimelate aminotransferase (410 aa).

Positions 15 and 42 each coordinate substrate. Pyridoxal 5'-phosphate contacts are provided by residues Tyr72, 108-109 (SK), Tyr132, Asn187, Tyr218, and 246-248 (SFS). Residues Lys109, Tyr132, and Asn187 each contribute to the substrate site. Lys249 is modified (N6-(pyridoxal phosphate)lysine). 2 residues coordinate pyridoxal 5'-phosphate: Arg257 and Asn292. Asn292 and Arg388 together coordinate substrate.

Belongs to the class-I pyridoxal-phosphate-dependent aminotransferase family. LL-diaminopimelate aminotransferase subfamily. In terms of assembly, homodimer. Pyridoxal 5'-phosphate serves as cofactor.

The catalysed reaction is (2S,6S)-2,6-diaminopimelate + 2-oxoglutarate = (S)-2,3,4,5-tetrahydrodipicolinate + L-glutamate + H2O + H(+). Its pathway is amino-acid biosynthesis; L-lysine biosynthesis via DAP pathway; LL-2,6-diaminopimelate from (S)-tetrahydrodipicolinate (aminotransferase route): step 1/1. In terms of biological role, involved in the synthesis of meso-diaminopimelate (m-DAP or DL-DAP), required for both lysine and peptidoglycan biosynthesis. Catalyzes the direct conversion of tetrahydrodipicolinate to LL-diaminopimelate. The polypeptide is LL-diaminopimelate aminotransferase (Geotalea daltonii (strain DSM 22248 / JCM 15807 / FRC-32) (Geobacter daltonii)).